The sequence spans 555 residues: Glypican-6 (555 aa).

Residues 1–23 (MPSWIGAVILPLLGLLLSLPAGA) form the signal peptide. Low complexity predominate over residues 348-357 (PALRSARSAP). Disordered stretches follow at residues 348-376 (PALR…PTTA) and 480-501 (GNDV…GSGC). Residue Ser529 is the site of GPI-anchor amidated serine attachment. The propeptide at 530-555 (SAAQRGHSLLSWSLTCIVLALQRLCR) is removed in mature form.

This sequence belongs to the glypican family. As to expression, widely expressed. High expression in fetal kidney and lung and lower expressions in fetal liver and brain. In adult tissues, very abundant in ovary, high levels also observed in liver, kidney, small intestine and colon. Not detected in peripheral blood leukocytes. Detected in breast cancer cells (at protein level).

The protein resides in the cell membrane. Its subcellular location is the secreted. It is found in the extracellular space. Its function is as follows. Cell surface proteoglycan that bears heparan sulfate. Putative cell surface coreceptor for growth factors, extracellular matrix proteins, proteases and anti-proteases. Enhances migration and invasion of cancer cells through WNT5A signaling. The chain is Glypican-6 (GPC6) from Homo sapiens (Human).